The following is a 221-amino-acid chain: Germin-like protein 8-2 (221 aa).

The first 24 residues, 1-24 (MASSSFSFLLVAALLGLASWKAIA), serve as a signal peptide directing secretion. A disulfide bridge connects residues Cys34 and Cys49. N-linked (GlcNAc...) asparagine glycosylation is found at Asn54 and Asn79. The Cupin type-1 domain maps to 64 to 215 (AMLDKPRDTN…AFQVDKKIID (152 aa)). Mn(2+) contacts are provided by His112, His114, Glu119, and His160.

It belongs to the germin family. Oligomer (believed to be a pentamer but probably hexamer).

Its subcellular location is the secreted. The protein localises to the extracellular space. The protein resides in the apoplast. Functionally, plays a role in broad-spectrum disease resistance. Probably has no oxalate oxidase activity even if the active site is conserved. The sequence is that of Germin-like protein 8-2 (GER3) from Oryza sativa subsp. japonica (Rice).